Reading from the N-terminus, the 608-residue chain is Glutamine--fructose-6-phosphate aminotransferase [isomerizing] (608 aa).

Cys2 serves as the catalytic Nucleophile; for GATase activity. The region spanning 2-217 is the Glutamine amidotransferase type-2 domain; sequence CGIVGYIGKK…DNEFVLMTKD (216 aa). SIS domains lie at 284 to 424 and 453 to 598; these read ISKE…EKGT and IMKK…VDKP. The For Fru-6P isomerization activity role is filled by Lys603.

As to quaternary structure, homodimer.

Its subcellular location is the cytoplasm. The enzyme catalyses D-fructose 6-phosphate + L-glutamine = D-glucosamine 6-phosphate + L-glutamate. In terms of biological role, catalyzes the first step in hexosamine metabolism, converting fructose-6P into glucosamine-6P using glutamine as a nitrogen source. This is Glutamine--fructose-6-phosphate aminotransferase [isomerizing] from Clostridium tetani (strain Massachusetts / E88).